The chain runs to 353 residues: MEKFKAAMLLGTVGDALGYGNVCRENSASGSIQEELQKTRGLDSLVLSPGKWPVSDNTIMHMATAEALTTDYWCLDDLYREMVKRYVETVEKLSEHRPDPSTIEGCSQLKPDNYLLAWHTPFSEKGSGFGAATKAMCIGMRYWKPERLETLIEVSIECGRMTHNHPTGFLGSLCTALFASYAIQGKSLVQWGRDMLKVLPLAEEYCRKSIRHMAEYQEHWFYFEAKWQFYLEERKIREDSEVTAVFPDNYDAEERDKTYKKWSSEGRGGRRGHDAPMIAYDALLASGSSWTELCQRAMFHRGESGATGTIAGCLFGLLHGLATVPPGLYQELEHKGRLEDLGTALHRLSTEEK.

Phosphoserine is present on Ser-27.

This sequence belongs to the ADP-ribosylglycohydrolase family.

It localises to the cytoplasm. It is found in the myofibril. The protein localises to the sarcomere. In terms of biological role, required for myofibril assembly and outgrowth of the cardiac chambers in the developing heart. Appears to be catalytically inactive, showing no activity against O-acetyl-ADP-ribose. This chain is Inactive ADP-ribosyltransferase ARH2 (Adprhl1), found in Rattus norvegicus (Rat).